The chain runs to 243 residues: Adenosylcobinamide-GDP ribazoletransferase (243 aa).

The next 5 membrane-spanning stretches (helical) occupy residues 31 to 48, 61 to 81, 109 to 129, 134 to 154, and 188 to 208; these read LLFY…LWVL, AALL…DGLA, IAVV…VALI, GFAL…LFLC, and LLLG…LFFW.

This sequence belongs to the CobS family. Mg(2+) is required as a cofactor.

It is found in the cell inner membrane. It catalyses the reaction alpha-ribazole + adenosylcob(III)inamide-GDP = adenosylcob(III)alamin + GMP + H(+). It carries out the reaction alpha-ribazole 5'-phosphate + adenosylcob(III)inamide-GDP = adenosylcob(III)alamin 5'-phosphate + GMP + H(+). It functions in the pathway cofactor biosynthesis; adenosylcobalamin biosynthesis; adenosylcobalamin from cob(II)yrinate a,c-diamide: step 7/7. Functionally, joins adenosylcobinamide-GDP and alpha-ribazole to generate adenosylcobalamin (Ado-cobalamin). Also synthesizes adenosylcobalamin 5'-phosphate from adenosylcobinamide-GDP and alpha-ribazole 5'-phosphate. The sequence is that of Adenosylcobinamide-GDP ribazoletransferase from Pseudomonas fluorescens (strain ATCC BAA-477 / NRRL B-23932 / Pf-5).